The primary structure comprises 359 residues: MSVSVLIVDDSAVVREVLSQMLSSAPDIEVLGAAPDPIFAMTRMKQRWPDVIVLDIEMPRMDGLTFLRKIMDERPTPVIICSSLTEKGARITLDALAAGAVAIITKPALNQRAFLLEAAKELVQEVRDAARAKMGVVKRISQGAAEHAPPAPKLTADVVLEAPSGLEKYRTTEKIIAIGTSTGGTQALEYLLPKLPATCPGVAVVQHMPEKFTASFAERLNRLCRVEVKEAQTGDRLISGVALIAPGGKHLLVKRNGAQYVADVKDGPLVSRHRPSVDVLFRSVAVCAGGNAIGVIMTGMGDDGARGMREMHDAGARTVAQDEESCVVFGMPAEAINHGGVDEVMSLERIAHMLAGIRG.

The region spanning 4 to 121 is the Response regulatory domain; sequence SVLIVDDSAV…RAFLLEAAKE (118 aa). Position 55 is a 4-aspartylphosphate (Asp55). The region spanning 169 to 354 is the CheB-type methylesterase domain; it reads YRTTEKIIAI…MSLERIAHML (186 aa). Catalysis depends on residues Ser181, His207, and Asp303.

The protein belongs to the CheB family. Phosphorylated by CheA. Phosphorylation of the N-terminal regulatory domain activates the methylesterase activity.

The protein localises to the cytoplasm. The catalysed reaction is [protein]-L-glutamate 5-O-methyl ester + H2O = L-glutamyl-[protein] + methanol + H(+). It catalyses the reaction L-glutaminyl-[protein] + H2O = L-glutamyl-[protein] + NH4(+). In terms of biological role, involved in chemotaxis. Part of a chemotaxis signal transduction system that modulates chemotaxis in response to various stimuli. Catalyzes the demethylation of specific methylglutamate residues introduced into the chemoreceptors (methyl-accepting chemotaxis proteins or MCP) by CheR. Also mediates the irreversible deamidation of specific glutamine residues to glutamic acid. This Chromobacterium violaceum (strain ATCC 12472 / DSM 30191 / JCM 1249 / CCUG 213 / NBRC 12614 / NCIMB 9131 / NCTC 9757 / MK) protein is Protein-glutamate methylesterase/protein-glutamine glutaminase 1.